The chain runs to 272 residues: MDTEQGLKNHTAKTSPHDETAMASLTTIPTSVTLSAEQFEKLYLSPLTQRQGMLSKQMGNPTPLALGGFVITTTPLSCCLMGWRGATGSGIAFTGPIIFLGGGLLVLTSILEFILGNTFPCVVFGTIGAFWFAFGCTMTPAFNAAAPFSTSATDTVAGLSSPDFLNTYAFLFIWMGVLMLIFLACATRTNAVYVAIFTTLTLVFGFLSGAYWRLAVADALVGNRLVVAAGACLFVASMLGFYLLVAQLFDSVGLPVRLPVGDLSRFWDRRAR.

Residues 1–14 (MDTEQGLKNHTAKT) show a composition bias toward polar residues. The disordered stretch occupies residues 1–21 (MDTEQGLKNHTAKTSPHDETA). Helical transmembrane passes span 63 to 83 (PLALGGFVITTTPLSCCLMGW), 91 to 111 (IAFTGPIIFLGGGLLVLTSIL), 122 to 144 (VVFGTIGAFWFAFGCTMTPAFNA), 164 to 184 (FLNTYAFLFIWMGVLMLIFLA), 192 to 212 (VYVAIFTTLTLVFGFLSGAYW), and 225 to 245 (LVVAAGACLFVASMLGFYLLV).

It belongs to the acetate uptake transporter (AceTr) (TC 2.A.96) family.

Its subcellular location is the cell membrane. It is found in the cell septum. The protein is Protein alcS of Aspergillus fumigatus (strain CBS 144.89 / FGSC A1163 / CEA10) (Neosartorya fumigata).